Consider the following 274-residue polypeptide: Undecaprenyl-diphosphatase 1 (274 aa).

7 helical membrane-spanning segments follow: residues 8 to 28 (WLLI…PIPV), 45 to 65 (IEGL…VIAI), 92 to 112 (FRIS…ALLF), 120 to 140 (LKQL…LWLI), 195 to 215 (FSFF…ISDI), 230 to 250 (IAFI…MNIM), and 253 to 273 (GKLI…LSLL).

The protein belongs to the UppP family.

It localises to the cell membrane. It carries out the reaction di-trans,octa-cis-undecaprenyl diphosphate + H2O = di-trans,octa-cis-undecaprenyl phosphate + phosphate + H(+). In terms of biological role, catalyzes the dephosphorylation of undecaprenyl diphosphate (UPP). Confers resistance to bacitracin. The polypeptide is Undecaprenyl-diphosphatase 1 (Halalkalibacterium halodurans (strain ATCC BAA-125 / DSM 18197 / FERM 7344 / JCM 9153 / C-125) (Bacillus halodurans)).